A 281-amino-acid polypeptide reads, in one-letter code: Sulfur carrier protein FdhD (281 aa).

The active-site Cysteine persulfide intermediate is the Cys117.

Belongs to the FdhD family.

The protein localises to the cytoplasm. Required for formate dehydrogenase (FDH) activity. Acts as a sulfur carrier protein that transfers sulfur from IscS to the molybdenum cofactor prior to its insertion into FDH. The chain is Sulfur carrier protein FdhD from Xanthomonas euvesicatoria pv. vesicatoria (strain 85-10) (Xanthomonas campestris pv. vesicatoria).